The sequence spans 573 residues: Transcription factor E3 (573 aa).

Ser47 is modified (phosphoserine; by MTOR). A disordered region spans residues 91 to 151 (TLSASSSAEG…SPAPASPAIS (61 aa)). A compositionally biased stretch (low complexity) spans 107–126 (SSSSSSRVLLRQQLMRAQAQ). The span at 127-136 (EQERRERREQ) shows a compositional bias: basic and acidic residues. The segment covering 137–151 (ASSFPSPAPASPAIS) has biased composition (low complexity). Asymmetric dimethylarginine is present on Arg186. The interval 209 to 248 (LASQALTPPPGGASVQPLPTPEAAHAPGPTSSAPNSPMAL) is disordered. The tract at residues 258 to 269 (EIDDVIDEIISL) is strong transcription activation domain. Ser319 is modified (phosphoserine; by MTOR). Residue Lys337 forms a Glycyl lysine isopeptide (Lys-Gly) (interchain with G-Cter in SUMO2) linkage. The 54-residue stretch at 344–397 (QKKDNHNLIERRRRFNINDRIKELGTLIPKSSDPEMRWNKGTILKASVDYIRKL) folds into the bHLH domain. The Nuclear localization signal motif lies at 354 to 357 (RRRR). A leucine-zipper region spans residues 407-428 (LESRQRSLEQANRSLQLRIQEL). A disordered region spans residues 531–573 (VGGLSGGTLSPLRAASDPLLSSVSPAVSKASSRRSSFSMEEES). A compositionally biased stretch (low complexity) spans 537–573 (GTLSPLRAASDPLLSSVSPAVSKASSRRSSFSMEEES). 6 positions are modified to phosphoserine: Ser540, Ser546, Ser552, Ser554, Ser558, and Ser566.

Belongs to the MiT/TFE family. As to quaternary structure, homodimer and heterodimer; with TFEB or MITF. Interacts with RRAGC/RagC GDP-bound and RRAGD/RagD GDP-bound; promoting its recruitment to lysosomal membrane in the presence of nutrients. Phosphorylation ar Ser-47 and Ser-319 by MTOR via non-canonical mTORC1 pathway regulates its stability and subcellular location, respectively. When nutrients are present, phosphorylation by MTOR at Ser-47 promotes ubiquitination by the SCF(BTRC) complex, followed by degradation. When nutrients are present, phosphorylation by MTOR at Ser-319 also promotes association with 14-3-3/YWHA adapters and retention in the cytosol. Phosphorylation at Ser-47 plays a more critical role than phosphorylation at Ser-319 for TFE3 inactivation. Inhibition of mTORC1, starvation and lysosomal disruption, promotes dephosphorylation and transcription factor activity. Post-translationally, ubiquitinated by the SCF(BTRC) and SCF(FBXW11) complexes following phosphorylation at Ser-47 by MTOR, leading to its degradation by the proteasome. In terms of processing, sumoylated; does not affect dimerization with MITF.

The protein resides in the cytoplasm. Its subcellular location is the cytosol. The protein localises to the nucleus. It localises to the lysosome membrane. Transcription factor that acts as a master regulator of lysosomal biogenesis and immune response. Specifically recognizes and binds E-box sequences (5'-CANNTG-3'); efficient DNA-binding requires dimerization with itself or with another MiT/TFE family member such as TFEB or MITF. Involved in the cellular response to amino acid availability by acting downstream of MTOR: in the presence of nutrients, TFE3 phosphorylation by MTOR promotes its inactivation. Upon starvation or lysosomal stress, inhibition of MTOR induces TFE3 dephosphorylation, resulting in transcription factor activity. Specifically recognizes and binds the CLEAR-box sequence (5'-GTCACGTGAC-3') present in the regulatory region of many lysosomal genes, leading to activate their expression, thereby playing a central role in expression of lysosomal genes. Maintains the pluripotent state of embryonic stem cells by promoting the expression of genes such as ESRRB; mTOR-dependent TFE3 cytosolic retention and inactivation promotes exit from pluripotency. Required to maintain the naive pluripotent state of hematopoietic stem cell; mTOR-dependent cytoplasmic retention of TFE3 promotes the exit of hematopoietic stem cell from pluripotency. TFE3 activity is also involved in the inhibition of neuronal progenitor differentiation. Acts as a positive regulator of browning of adipose tissue by promoting expression of target genes; mTOR-dependent phosphorylation promotes cytoplasmic retention of TFE3 and inhibits browning of adipose tissue. In association with TFEB, activates the expression of CD40L in T-cells, thereby playing a role in T-cell-dependent antibody responses in activated CD4(+) T-cells and thymus-dependent humoral immunity. Specifically recognizes the MUE3 box, a subset of E-boxes, present in the immunoglobulin enhancer. It also binds very well to a USF/MLTF site. May regulate lysosomal positioning in response to nutrient deprivation by promoting the expression of PIP4P1. The polypeptide is Transcription factor E3 (Bos taurus (Bovine)).